A 611-amino-acid polypeptide reads, in one-letter code: Cilia- and flagella-associated protein 100 (611 aa).

Over residues 1-17 the composition is skewed to polar residues; that stretch reads MSEIPSTIVSKNMTNDK. Residues 1–57 are disordered; it reads MSEIPSTIVSKNMTNDKNSLESMNISSSSSTEENPKKQARKNEEHGPDPSANPFHLS. A compositionally biased stretch (low complexity) spans 20–32; it reads LESMNISSSSSTE. A compositionally biased stretch (basic and acidic residues) spans 33–47; it reads ENPKKQARKNEEHGP. Coiled-coil stretches lie at residues 101 to 128, 164 to 203, and 230 to 257; these read SLRRQLQLEDKQEDLEARAEAEHQRAFR, ALDVKRREIQRLETLATKEEARLERAEKSLEKDAALFDEF, and LEIRDLTTQIVNIKSEISRFEDTLKHYK. Disordered stretches follow at residues 287–323 and 338–380; these read EVSEASKESSVNSTPGDKGPGIKGKASSMWAKEGQGT and SPSY…GEEP. Over residues 338 to 357 the composition is skewed to low complexity; it reads SPSYLSSPQQGSQPSESSGG. 2 coiled-coil regions span residues 393-432 and 526-578; these read VFRELEEQNLSLIQNSQETEKTLEELSHTLKHTQIRMDRE and QVKI…RGRT.

The protein belongs to the CFAP100 family.

The protein localises to the cytoplasm. It is found in the cytoskeleton. It localises to the cilium axoneme. Its function is as follows. May play a role in ciliary/flagellar motility by regulating the assembly and the activity of axonemal inner dynein arm. The polypeptide is Cilia- and flagella-associated protein 100 (Homo sapiens (Human)).